We begin with the raw amino-acid sequence, 172 residues long: MSNKTAKNIRPGELNLKEKLVHINRTAKVVKGGKRFGFNAIVVVGDKEGHVGYGLGKANEVQDAIAKGVEDGKKNVVKVPIVKGTIPHQVVAKYGSAKVLMKPATPGTGLIAGGAVRAVLEMAGIHDILTKSLGSSNPHNVVKAAIKGLESMSDAYEVGERRSKNLKEVFES.

Residues 16-79 form the S5 DRBM domain; that stretch reads LKEKLVHINR…EDGKKNVVKV (64 aa).

Belongs to the universal ribosomal protein uS5 family. In terms of assembly, part of the 30S ribosomal subunit. Contacts proteins S4 and S8.

Functionally, with S4 and S12 plays an important role in translational accuracy. In terms of biological role, located at the back of the 30S subunit body where it stabilizes the conformation of the head with respect to the body. This Prosthecochloris aestuarii (strain DSM 271 / SK 413) protein is Small ribosomal subunit protein uS5.